Reading from the N-terminus, the 492-residue chain is N-succinylglutamate 5-semialdehyde dehydrogenase (492 aa).

Residue 220–225 (GSASTG) coordinates NAD(+). Catalysis depends on residues Glu-243 and Cys-277.

This sequence belongs to the aldehyde dehydrogenase family. AstD subfamily.

It catalyses the reaction N-succinyl-L-glutamate 5-semialdehyde + NAD(+) + H2O = N-succinyl-L-glutamate + NADH + 2 H(+). Its pathway is amino-acid degradation; L-arginine degradation via AST pathway; L-glutamate and succinate from L-arginine: step 4/5. Catalyzes the NAD-dependent reduction of succinylglutamate semialdehyde into succinylglutamate. The chain is N-succinylglutamate 5-semialdehyde dehydrogenase from Salmonella schwarzengrund (strain CVM19633).